Reading from the N-terminus, the 302-residue chain is Methionyl-tRNA formyltransferase (302 aa).

Residue 108-111 (SLLP) coordinates (6S)-5,6,7,8-tetrahydrofolate. Basic and acidic residues predominate over residues 279–288 (KRPMEPEEFL). The interval 279–302 (KRPMEPEEFLRGFPLPEGSRAHTS) is disordered.

It belongs to the Fmt family.

It catalyses the reaction L-methionyl-tRNA(fMet) + (6R)-10-formyltetrahydrofolate = N-formyl-L-methionyl-tRNA(fMet) + (6S)-5,6,7,8-tetrahydrofolate + H(+). Its function is as follows. Attaches a formyl group to the free amino group of methionyl-tRNA(fMet). The formyl group appears to play a dual role in the initiator identity of N-formylmethionyl-tRNA by promoting its recognition by IF2 and preventing the misappropriation of this tRNA by the elongation apparatus. The chain is Methionyl-tRNA formyltransferase from Cereibacter sphaeroides (strain ATCC 17023 / DSM 158 / JCM 6121 / CCUG 31486 / LMG 2827 / NBRC 12203 / NCIMB 8253 / ATH 2.4.1.) (Rhodobacter sphaeroides).